A 305-amino-acid polypeptide reads, in one-letter code: Virulence plasmid integrase pGP7-D (305 aa).

In terms of domain architecture, Core-binding (CB) spans 13-99 (LTFGDASEIW…CYISFTKFLY (87 aa)). One can recognise a Tyr recombinase domain in the interval 127 to 305 (IKTESISKQE…SPLVQTPPIL (179 aa)). Catalysis depends on residues K188 and R257. Y289 acts as the O-(3'-phospho-DNA)-tyrosine intermediate in catalysis.

The protein belongs to the 'phage' integrase family.

In Chlamydia trachomatis serovar L2 (strain ATCC VR-902B / DSM 19102 / 434/Bu), this protein is Virulence plasmid integrase pGP7-D.